The primary structure comprises 167 residues: UPF0225 protein VV1358 (167 aa).

This sequence belongs to the UPF0225 family.

The sequence is that of UPF0225 protein VV1358 from Vibrio vulnificus (strain YJ016).